The following is a 315-amino-acid chain: Glutamyl-Q tRNA(Asp) synthetase (315 aa).

L-glutamate-binding positions include 21–25 and Glu63; that span reads RFAPS. The 'HIGH' region motif lies at 24–34; sequence PSPSGLLHFGS. Cys119, Cys121, Tyr133, and Cys137 together coordinate Zn(2+). L-glutamate is bound by residues Tyr190 and Arg208. The short motif at 251-255 is the 'KMSKS' region element; that stretch reads KLSKQ. Residue Lys254 coordinates ATP.

This sequence belongs to the class-I aminoacyl-tRNA synthetase family. GluQ subfamily. The cofactor is Zn(2+).

Functionally, catalyzes the tRNA-independent activation of glutamate in presence of ATP and the subsequent transfer of glutamate onto a tRNA(Asp). Glutamate is transferred on the 2-amino-5-(4,5-dihydroxy-2-cyclopenten-1-yl) moiety of the queuosine in the wobble position of the QUC anticodon. This is Glutamyl-Q tRNA(Asp) synthetase from Colwellia psychrerythraea (strain 34H / ATCC BAA-681) (Vibrio psychroerythus).